The chain runs to 200 residues: Pyrrolidone-carboxylate peptidase (200 aa).

Active-site residues include E79, C142, and H166.

The protein belongs to the peptidase C15 family. As to quaternary structure, homotetramer.

It localises to the cytoplasm. It carries out the reaction Release of an N-terminal pyroglutamyl group from a polypeptide, the second amino acid generally not being Pro.. In terms of biological role, removes 5-oxoproline from various penultimate amino acid residues except L-proline. The chain is Pyrrolidone-carboxylate peptidase (pcp) from Pyrococcus abyssi (strain GE5 / Orsay).